Here is a 285-residue protein sequence, read N- to C-terminus: Bifunctional protein FolD (285 aa).

NADP(+) contacts are provided by residues 165-167 (GRS) and serine 190.

Belongs to the tetrahydrofolate dehydrogenase/cyclohydrolase family. Homodimer.

It catalyses the reaction (6R)-5,10-methylene-5,6,7,8-tetrahydrofolate + NADP(+) = (6R)-5,10-methenyltetrahydrofolate + NADPH. The enzyme catalyses (6R)-5,10-methenyltetrahydrofolate + H2O = (6R)-10-formyltetrahydrofolate + H(+). It participates in one-carbon metabolism; tetrahydrofolate interconversion. Functionally, catalyzes the oxidation of 5,10-methylenetetrahydrofolate to 5,10-methenyltetrahydrofolate and then the hydrolysis of 5,10-methenyltetrahydrofolate to 10-formyltetrahydrofolate. The polypeptide is Bifunctional protein FolD (Streptococcus pneumoniae serotype 4 (strain ATCC BAA-334 / TIGR4)).